Consider the following 305-residue polypeptide: tRNA pseudouridine synthase B (305 aa).

The active-site Nucleophile is the aspartate 39.

This sequence belongs to the pseudouridine synthase TruB family. Type 1 subfamily.

It carries out the reaction uridine(55) in tRNA = pseudouridine(55) in tRNA. In terms of biological role, responsible for synthesis of pseudouridine from uracil-55 in the psi GC loop of transfer RNAs. This chain is tRNA pseudouridine synthase B, found in Staphylococcus epidermidis (strain ATCC 35984 / DSM 28319 / BCRC 17069 / CCUG 31568 / BM 3577 / RP62A).